A 296-amino-acid polypeptide reads, in one-letter code: MTITASLVKELRQRTSAGMMDCKQALTETNGDMEAAIDLMRTSGAAKATRKAGRITIEGLVKVNISADKKTVTILEVNSETDFVTKGDVFIGFVDMLGTLALKTTPINIEEFLSQTLDNGDSLEKAREDIIAKVGENIAIRRVQTITTNNGVIGTYKHGERIAVVTVLEGGDEVLAKDIAMHIAASKPECISEAELSTDLLEREKAIFVKQAKESEKPDNFIEKIIVGRMKKFVNEITLYGQYFVKDPDTTIGKLVQSNNAQVKSFVRFEVGEGIEKKEENFADEVMAQIQGANTD.

Positions 81–84 (TDFV) are involved in Mg(2+) ion dislocation from EF-Tu.

The protein belongs to the EF-Ts family.

The protein resides in the cytoplasm. In terms of biological role, associates with the EF-Tu.GDP complex and induces the exchange of GDP to GTP. It remains bound to the aminoacyl-tRNA.EF-Tu.GTP complex up to the GTP hydrolysis stage on the ribosome. The protein is Elongation factor Ts of Ruthia magnifica subsp. Calyptogena magnifica.